Reading from the N-terminus, the 81-residue chain is Cytotoxin 1 (81 aa).

A signal peptide spans 1 to 21; it reads MKTLLLTLVVVTIVCLDLGYT. Cystine bridges form between C24–C42, C35–C59, C63–C74, and C75–C80.

The protein belongs to the three-finger toxin family. Short-chain subfamily. Type IA cytotoxin sub-subfamily. Monomer in solution; Homodimer and oligomer in the presence of negatively charged lipids forming a pore with a size ranging between 20 and 30 Angstroms. In terms of tissue distribution, expressed by the venom gland.

Its subcellular location is the secreted. It is found in the target cell membrane. Its function is as follows. Basic protein that binds to cell membrane and depolarizes cardiomyocytes. It also shows lytic activities on many other cells, including red blood cells. Interaction with sulfatides in the cell membrane induces pore formation and cell internalization and is responsible for cytotoxicity in cardiomyocytes. It targets the mitochondrial membrane and induces mitochondrial swelling and fragmentation. It binds to the integrin alpha-V/beta-3 (ITGAV/ITGB3) with a moderate affinity and inhibits protein kinases C. It also binds with high affinity to heparin. It also causes skeletal muscle necrosis after intramuscular injection into mice. This Naja atra (Chinese cobra) protein is Cytotoxin 1.